We begin with the raw amino-acid sequence, 810 residues long: Zinc finger transcription factor YRR1 (810 aa).

The segment at 1–47 (MKRRSDALLGSFQATNVTPPSDNSNSTAGGANGSNSGTPTSTSGKKR) is disordered. Residues 12–22 (FQATNVTPPSD) are compositionally biased toward polar residues. Residues 23–43 (NSNSTAGGANGSNSGTPTSTS) are compositionally biased toward low complexity. Positions 54–82 (CGFCRRRKLRCDQQKPMCSTCISRNLTTC) form a DNA-binding region, zn(2)-C6 fungal-type. Residues 722-742 (ELDPQSDNPSSEAKIVSDRQR) form a disordered region.

The protein localises to the cytoplasm. It is found in the nucleus. Transcription factor involved in the regulation of multidrug resistance genes. Acts in concert with YRR1. The protein is Zinc finger transcription factor YRR1 (YRR1) of Saccharomyces cerevisiae (strain ATCC 204508 / S288c) (Baker's yeast).